Here is a 228-residue protein sequence, read N- to C-terminus: Sodium channel regulatory subunit beta-4 (228 aa).

A signal peptide spans 1-30; that stretch reads MPGAGDGGKAPARWLGTGLLGLFLLPVTLS. The Ig-like C2-type domain maps to 31-148; sequence LEVSVGKATD…NNLQHHATIF (118 aa). The Extracellular portion of the chain corresponds to 31-162; sequence LEVSVGKATD…DRLEEVDNTV (132 aa). N-linked (GlcNAc...) asparagine glycosylation is found at N45, N71, and N113. C53 and C131 are joined by a disulfide. Residues 163–183 form a helical membrane-spanning segment; it reads TLIILAVVGGVIGLLILILLI. The Cytoplasmic segment spans residues 184–228; that stretch reads KKLIIFILKKTREKKKECLVSSSGNDNTENGLPGSKAEEKPPSKV. A disordered region spans residues 200–228; the sequence is ECLVSSSGNDNTENGLPGSKAEEKPPSKV. Polar residues predominate over residues 203–213; that stretch reads VSSSGNDNTEN. A compositionally biased stretch (basic and acidic residues) spans 219 to 228; that stretch reads KAEEKPPSKV.

This sequence belongs to the sodium channel auxiliary subunit SCN4B (TC 8.A.17) family. In terms of assembly, a voltage-gated sodium (Nav) channel consists of an ion-conducting pore-forming alpha subunit functional on its own that is regulated by one or more beta subunits. The beta subunit SCN4B is disulfide-linked to the pore-forming alpha subunit. Interacts with SCN1A; regulatory subunit of SCN1A/Nav1.1. Interacts with SCN2A; regulatory subunit of SCN2A/Nav1.2. Post-translationally, contains an interchain disulfide bond with SCN2A. In terms of processing, N-glycosylated. As to expression, expressed at a high level in dorsal root ganglia, at a lower level in brain, spinal cord, skeletal muscle and heart. Expressed in the atrium.

The protein resides in the cell membrane. Functionally, regulatory subunit of multiple voltage-gated sodium (Nav) channels directly mediating the depolarization of excitable membranes. Navs, also called VGSCs (voltage-gated sodium channels) or VDSCs (voltage-dependent sodium channels), operate by switching between closed and open conformations depending on the voltage difference across the membrane. In the open conformation they allow Na(+) ions to selectively pass through the pore, along their electrochemical gradient. The influx of Na+ ions provokes membrane depolarization, initiating the propagation of electrical signals throughout cells and tissues. The accessory beta subunits participate in localization and functional modulation of the Nav channels. Modulates the activity of SCN1A/Nav1.1. Modulates the activity of SCN2A/Nav1.2. This is Sodium channel regulatory subunit beta-4 from Homo sapiens (Human).